The following is a 264-amino-acid chain: Ribosomal protein L11 methyltransferase (264 aa).

The S-adenosyl-L-methionine site is built by T116, G137, D159, and N200.

The protein belongs to the methyltransferase superfamily. PrmA family.

It is found in the cytoplasm. The enzyme catalyses L-lysyl-[protein] + 3 S-adenosyl-L-methionine = N(6),N(6),N(6)-trimethyl-L-lysyl-[protein] + 3 S-adenosyl-L-homocysteine + 3 H(+). Methylates ribosomal protein L11. This Thermotoga petrophila (strain ATCC BAA-488 / DSM 13995 / JCM 10881 / RKU-1) protein is Ribosomal protein L11 methyltransferase.